Here is a 497-residue protein sequence, read N- to C-terminus: Aluminum-activated malate transporter 10 (497 aa).

Transmembrane regions (helical) follow at residues 66–86 (KVVH…FYYM), 88–108 (PLYD…VVVF), 123–143 (VVAT…ATQS), 148–168 (VFVI…SRFV), 173–193 (ARFD…SVGG), and 210–230 (IAIG…IWAG). Disordered regions lie at residues 413–437 (PIET…ERTT) and 476–497 (DFEQ…PLSS). Residues 417–436 (NKPEEVPSEEENKVDSEERT) show a composition bias toward basic and acidic residues. A compositionally biased stretch (polar residues) spans 487–497 (DNNTKQPPLSS).

This sequence belongs to the aromatic acid exporter (TC 2.A.85) family.

Its subcellular location is the membrane. Its function is as follows. Malate transporter. The polypeptide is Aluminum-activated malate transporter 10 (ALMT10) (Arabidopsis thaliana (Mouse-ear cress)).